Consider the following 299-residue polypeptide: Oxygen-dependent coproporphyrinogen-III oxidase (299 aa).

Serine 92 is a binding site for substrate. The a divalent metal cation site is built by histidine 96 and histidine 106. The Proton donor role is filled by histidine 106. 108–110 (NVR) lines the substrate pocket. Histidine 145 and histidine 175 together coordinate a divalent metal cation. Residues 239–274 (YVEFNLVYDRGTLFGLQSGGRAESILMSLPPQVRWE) are important for dimerization. 257–259 (GGR) is a substrate binding site.

Belongs to the aerobic coproporphyrinogen-III oxidase family. As to quaternary structure, homodimer. The cofactor is a divalent metal cation.

Its subcellular location is the cytoplasm. It carries out the reaction coproporphyrinogen III + O2 + 2 H(+) = protoporphyrinogen IX + 2 CO2 + 2 H2O. It functions in the pathway porphyrin-containing compound metabolism; protoporphyrin-IX biosynthesis; protoporphyrinogen-IX from coproporphyrinogen-III (O2 route): step 1/1. Its function is as follows. Involved in the heme biosynthesis. Catalyzes the aerobic oxidative decarboxylation of propionate groups of rings A and B of coproporphyrinogen-III to yield the vinyl groups in protoporphyrinogen-IX. The protein is Oxygen-dependent coproporphyrinogen-III oxidase of Xanthomonas campestris pv. campestris (strain 8004).